An 83-amino-acid chain; its full sequence is Conotoxin Im22.1 (83 aa).

The signal sequence occupies residues 1–18; sequence MMMRVFIAMFFLLALVEA. Positions 19-26 are excised as a propeptide; that stretch reads GWPRLYDK.

This sequence belongs to the conotoxin E superfamily. Post-translationally, contain 4 disulfide bonds. In terms of tissue distribution, expressed by the venom duct.

Its subcellular location is the secreted. Functionally, probable neurotoxin. The sequence is that of Conotoxin Im22.1 from Conus imperialis (Imperial cone).